We begin with the raw amino-acid sequence, 460 residues long: tRNA(Ile)-lysidine synthase (460 aa).

Residue 37-42 coordinates ATP; the sequence is SGGADS.

Belongs to the tRNA(Ile)-lysidine synthase family.

It is found in the cytoplasm. The catalysed reaction is cytidine(34) in tRNA(Ile2) + L-lysine + ATP = lysidine(34) in tRNA(Ile2) + AMP + diphosphate + H(+). In terms of biological role, ligates lysine onto the cytidine present at position 34 of the AUA codon-specific tRNA(Ile) that contains the anticodon CAU, in an ATP-dependent manner. Cytidine is converted to lysidine, thus changing the amino acid specificity of the tRNA from methionine to isoleucine. In Treponema denticola (strain ATCC 35405 / DSM 14222 / CIP 103919 / JCM 8153 / KCTC 15104), this protein is tRNA(Ile)-lysidine synthase.